The chain runs to 1056 residues: Isoleucine--tRNA ligase (1056 aa).

Residues 1 to 13 show a composition bias toward polar residues; sequence MCDQGEVSSQNSS. A disordered region spans residues 1 to 26; sequence MCDQGEVSSQNSSDYKEQRPTPRPNL. The short motif at 63-73 is the 'HIGH' region element; the sequence is PFANGLPHFGH. A 'KMSKS' region motif is present at residues 632 to 636; it reads KASKS. Lys-635 is an ATP binding site.

This sequence belongs to the class-I aminoacyl-tRNA synthetase family. IleS type 2 subfamily. Monomer. Zn(2+) is required as a cofactor.

It localises to the cytoplasm. The enzyme catalyses tRNA(Ile) + L-isoleucine + ATP = L-isoleucyl-tRNA(Ile) + AMP + diphosphate. Catalyzes the attachment of isoleucine to tRNA(Ile). As IleRS can inadvertently accommodate and process structurally similar amino acids such as valine, to avoid such errors it has two additional distinct tRNA(Ile)-dependent editing activities. One activity is designated as 'pretransfer' editing and involves the hydrolysis of activated Val-AMP. The other activity is designated 'posttransfer' editing and involves deacylation of mischarged Val-tRNA(Ile). The chain is Isoleucine--tRNA ligase from Tropheryma whipplei (strain TW08/27) (Whipple's bacillus).